A 257-amino-acid chain; its full sequence is Urease accessory protein UreD (257 aa).

Belongs to the UreD family. UreD, UreF and UreG form a complex that acts as a GTP-hydrolysis-dependent molecular chaperone, activating the urease apoprotein by helping to assemble the nickel containing metallocenter of UreC. The UreE protein probably delivers the nickel.

The protein localises to the cytoplasm. Its function is as follows. Required for maturation of urease via the functional incorporation of the urease nickel metallocenter. The polypeptide is Urease accessory protein UreD (Sporosarcina pasteurii (Bacillus pasteurii)).